The following is a 2347-amino-acid chain: Proto-oncogene tyrosine-protein kinase ROS (2347 aa).

The signal sequence occupies residues 1–27 (MKNIYCLIPKLVNFATLGCLWISVVQC). Over 28 to 1859 (TVLNSCLKSC…LVGDDFWIPE (1832 aa)) the chain is Extracellular. Asn-52, Asn-114, and Asn-123 each carry an N-linked (GlcNAc...) asparagine glycan. 2 consecutive Fibronectin type-III domains span residues 101 to 196 (LPTA…VPET) and 197 to 285 (APLI…SSSA). 27 N-linked (GlcNAc...) asparagine glycosylation sites follow: Asn-324, Asn-352, Asn-396, Asn-471, Asn-607, Asn-628, Asn-706, Asn-714, Asn-732, Asn-939, Asn-961, Asn-1015, Asn-1087, Asn-1090, Asn-1095, Asn-1211, Asn-1272, Asn-1330, Asn-1458, Asn-1461, Asn-1474, Asn-1499, Asn-1565, Asn-1669, Asn-1715, Asn-1738, and Asn-1808. Residues 557 to 671 (LPGRPQELSV…EPSVGTTLVP (115 aa)) enclose the Fibronectin type-III 3 domain. Fibronectin type-III domains follow at residues 947–1042 (IPDS…TVPS) and 1043–1150 (APEN…TSEI). 4 consecutive Fibronectin type-III domains span residues 1450 to 1556 (DTVE…TKNG), 1557 to 1656 (VPEA…VEMF), 1658 to 1751 (TPEK…TKAG), and 1752 to 1854 (VPNK…VGDD). A helical transmembrane segment spans residues 1860–1882 (TSFILTIIVGIFLVVTIPLTFVW). At 1883 to 2347 (HRRLKNQKSA…THSGYGDGSD (465 aa)) the chain is on the cytoplasmic side. Positions 1945–2222 (LTLRLLLGSG…DQLQLFRNFF (278 aa)) constitute a Protein kinase domain. ATP-binding positions include 1951–1959 (LGSGAFGEV) and Lys-1980. The active-site Proton acceptor is Asp-2079. Tyr-2274 is modified (phosphotyrosine; by autocatalysis). A disordered region spans residues 2284-2311 (GEEKSEGPLGSQESESCGLRKEEKEPHA). Basic and acidic residues predominate over residues 2301–2311 (GLRKEEKEPHA). Phosphotyrosine; by autocatalysis is present on Tyr-2334.

This sequence belongs to the protein kinase superfamily. Tyr protein kinase family. Insulin receptor subfamily. Interacts with PTPN6 (via SH2 1 domain); the interaction is direct and promotes ROS1 dephosphorylation. Interacts with PTPN11; may activate the PI3 kinase-mTOR signaling pathway. Interacts with VAV3; constitutive interaction mediating VAV3 phosphorylation. In terms of processing, phosphorylated. Probably autophosphorylates. Phosphorylation at Tyr-2274 is required for the interaction with PTPN6 that mediates ROS1 dephosphorylation. Phosphorylation at Tyr-2274 stimulates the kinase activity and the activation of the ERK1 signaling cascade. Phosphorylation at Tyr-2274 and/or Tyr-2334 recruits PTPN11. In terms of tissue distribution, expressed in brain. Expression is increased in primary gliomas.

The protein localises to the cell membrane. The catalysed reaction is L-tyrosyl-[protein] + ATP = O-phospho-L-tyrosyl-[protein] + ADP + H(+). Its activity is regulated as follows. Inhibited by dephosphorylation by PTPN6. Its function is as follows. Receptor tyrosine kinase (RTK) that plays a role in epithelial cell differentiation and regionalization of the proximal epididymal epithelium. NELL2 is an endogenous ligand for ROS1. Upon endogenous stimulation by NELL2, ROS1 activates the intracellular signaling pathway and triggers epididymal epithelial differentiation and subsequent sperm maturation. May activate several downstream signaling pathways related to cell differentiation, proliferation, growth and survival including the PI3 kinase-mTOR signaling pathway. Mediates the phosphorylation of PTPN11, an activator of this pathway. May also phosphorylate and activate the transcription factor STAT3 to control anchorage-independent cell growth. Mediates the phosphorylation and the activation of VAV3, a guanine nucleotide exchange factor regulating cell morphology. May activate other downstream signaling proteins including AKT1, MAPK1, MAPK3, IRS1 and PLCG2. This is Proto-oncogene tyrosine-protein kinase ROS (ROS1) from Homo sapiens (Human).